The primary structure comprises 160 residues: uncharacterized protein (160 aa).

The first 27 residues, M1 to A27, serve as a signal peptide directing secretion.

This is an uncharacterized protein from Aquifex aeolicus (strain VF5).